Here is a 166-residue protein sequence, read N- to C-terminus: 3-isopropylmalate dehydratase small subunit (166 aa).

Belongs to the LeuD family. LeuD type 2 subfamily. As to quaternary structure, heterodimer of LeuC and LeuD.

It catalyses the reaction (2R,3S)-3-isopropylmalate = (2S)-2-isopropylmalate. Its pathway is amino-acid biosynthesis; L-leucine biosynthesis; L-leucine from 3-methyl-2-oxobutanoate: step 2/4. In terms of biological role, catalyzes the isomerization between 2-isopropylmalate and 3-isopropylmalate, via the formation of 2-isopropylmaleate. The chain is 3-isopropylmalate dehydratase small subunit from Moorella thermoacetica (strain ATCC 39073 / JCM 9320).